A 469-amino-acid chain; its full sequence is Probable Xaa-Pro aminopeptidase PEPP (469 aa).

Mn(2+) is bound by residues aspartate 264, aspartate 275, glutamate 398, and glutamate 438.

This sequence belongs to the peptidase M24B family. It depends on Mn(2+) as a cofactor.

It catalyses the reaction Release of any N-terminal amino acid, including proline, that is linked to proline, even from a dipeptide or tripeptide.. Functionally, catalyzes the removal of a penultimate prolyl residue from the N-termini of peptides. The sequence is that of Probable Xaa-Pro aminopeptidase PEPP (PEPP) from Ajellomyces capsulatus (strain G186AR / H82 / ATCC MYA-2454 / RMSCC 2432) (Darling's disease fungus).